A 64-amino-acid chain; its full sequence is Large ribosomal subunit protein eL37 (64 aa).

The Zn(2+) site is built by Cys20, Cys23, Cys35, and Cys38. The segment at 20–38 (CRRCGRRAFHVRKKVCAAC) adopts a C4-type zinc-finger fold.

Belongs to the eukaryotic ribosomal protein eL37 family. Requires Zn(2+) as cofactor.

Functionally, binds to the 23S rRNA. The sequence is that of Large ribosomal subunit protein eL37 from Methanococcus maripaludis (strain C6 / ATCC BAA-1332).